Here is a 373-residue protein sequence, read N- to C-terminus: DNA replication and repair protein RecF (373 aa).

30–37 serves as a coordination point for ATP; it reads GPNGQGKT.

It belongs to the RecF family.

It is found in the cytoplasm. Its function is as follows. The RecF protein is involved in DNA metabolism; it is required for DNA replication and normal SOS inducibility. RecF binds preferentially to single-stranded, linear DNA. It also seems to bind ATP. This chain is DNA replication and repair protein RecF, found in Streptomyces avermitilis (strain ATCC 31267 / DSM 46492 / JCM 5070 / NBRC 14893 / NCIMB 12804 / NRRL 8165 / MA-4680).